Consider the following 792-residue polypeptide: Probable G-protein coupled receptor 156 (792 aa).

Topologically, residues 1–49 (MEPEINCSEFCDSFPGQELDRRPLHDLCKTTITDSQHGSADISPLSPAL) are extracellular. N6 carries N-linked (GlcNAc...) asparagine glycosylation. The chain crosses the membrane as a helical span at residues 50–70 (LGVIWTFLSCGLLLVLFFLAF). At 71 to 86 (TIRCRKNRIVKMSSPN) the chain is on the cytoplasmic side. The chain crosses the membrane as a helical span at residues 87–107 (LNIVTLLGSCLTYSSAYLFGI). The Extracellular portion of the chain corresponds to 108–118 (QDALVGSSVEA). Residues 119–139 (LIQTRLSLLCIGTTLVFGPIL) traverse the membrane as a helical segment. The Cytoplasmic portion of the chain corresponds to 140–164 (GKSWRLYKVFTQRVPDKRVIIKDLQ). Residues 165 to 185 (LLGLVAALVVADVILLVTWVL) traverse the membrane as a helical segment. Topologically, residues 186 to 222 (TDPIQCLQILGVSMKVTGRDVSCSLTNTHFCASRYSD) are extracellular. The chain crosses the membrane as a helical span at residues 223–243 (VWIALVLGCKGLLLLYGAYLA). At 244–257 (GLTNHVSSPPVNQS) the chain is on the cytoplasmic side. The chain crosses the membrane as a helical span at residues 258 to 278 (LTIMVGVNLLLLTAGLLFVVT). Topologically, residues 279 to 287 (RYLHSWPNL) are extracellular. Residues 288–308 (VFGLTSGGIFVCTTTVNCCVF) traverse the membrane as a helical segment. Residues 309-792 (LPQLRQRKAF…FKDDLKPTLV (484 aa)) are Cytoplasmic-facing. The stretch at 354 to 390 (EXSCMERLLTEKNAVIESLQEQVSNAKEKLVKLMSAE) forms a coiled coil. Disordered regions lie at residues 407–457 (GGPA…KYDM), 469–516 (GCSQ…EVLP), and 538–704 (DLGT…QRQP). The span at 422 to 434 (AAAEDSLPASAAS) shows a compositional bias: low complexity. Basic and acidic residues-rich tracts occupy residues 443–457 (SRRD…KYDM) and 474–486 (PKAE…ERGN). The segment covering 554–567 (PWKSNTSGSPQKLS) has biased composition (polar residues). Residues 578–589 (VRRRRAAQRARS) show a composition bias toward basic residues. Over residues 602 to 619 (QANNTVSGSQNGLIVQNR) the composition is skewed to polar residues. Residues 620–635 (DSPRLDHHNARSKEPR) are compositionally biased toward basic and acidic residues. Residues 675–704 (PRQPSASAPAQSSTAPCLSSXPALPRQRQP) are compositionally biased toward low complexity.

It belongs to the G-protein coupled receptor 3 family. GABA-B receptor subfamily. In terms of tissue distribution, widely expressed throughout the brain and is particularly dense in the olfactory tubercles, islands of Calleja, nucleus accumbens, piriform cortex and all fields of the hippocampus.

It is found in the cell membrane. Its function is as follows. Orphan G-protein coupled receptor involved in the regulation of hair cell orientation in mechanosensory organs of the inner ear. It is required to trigger a 180 degree reversal in hair cell orientation, creating a virtual line of polarity reversal (LPR) across which stereociliary bundles are arranged in opposite orientations. This Rattus norvegicus (Rat) protein is Probable G-protein coupled receptor 156 (Gpr156).